We begin with the raw amino-acid sequence, 328 residues long: MTIYSKIIGTGSYLPPNRVTNQELTAQLASNGIETSDEWIVSRSGISARHYADAGVQSSDLAVEAAKRALEMAKLGVDDVDLIILATSTPDFFGGFPSTACVVQRKLGITNDCAAVDVQAVCSGFVYAVSIADNFIKAGTHKNVLVIGAEVFSRIIDFEDRTTCVLFGDGAGAVLMTASQEPGVLATKLHANGNYGDILCLPGKVSKGVVEGSAFLYMDGPAVFKLAVSVLDKVAHEALEIAGMQSSEVDWIIPHQANIRIMQSTAKKLGLGMDKMIVTVDQHGNTSAASIPMALDVGVRDGRIKPGQNVMMEGVGGGFTWGAVLARM.

Active-site residues include Cys122 and His255. The tract at residues 256–260 (QANIR) is ACP-binding. Residue Asn285 is part of the active site.

It belongs to the thiolase-like superfamily. FabH family. Homodimer.

It localises to the cytoplasm. The enzyme catalyses malonyl-[ACP] + acetyl-CoA + H(+) = 3-oxobutanoyl-[ACP] + CO2 + CoA. It participates in lipid metabolism; fatty acid biosynthesis. Its function is as follows. Catalyzes the condensation reaction of fatty acid synthesis by the addition to an acyl acceptor of two carbons from malonyl-ACP. Catalyzes the first condensation reaction which initiates fatty acid synthesis and may therefore play a role in governing the total rate of fatty acid production. Possesses both acetoacetyl-ACP synthase and acetyl transacylase activities. Its substrate specificity determines the biosynthesis of branched-chain and/or straight-chain of fatty acids. The protein is Beta-ketoacyl-[acyl-carrier-protein] synthase III of Janthinobacterium sp. (strain Marseille) (Minibacterium massiliensis).